The primary structure comprises 221 residues: MVSFTTLLTAVATAVSAVTASPLEALKRGIQPGTGVHDGYFYSFWTDGRGYVDFNNGPRGSYRVSWSNVNNWVGGKGWNPGPPRRIAYNGTWNNWNVNSYLALYGWTTNPLVEYYIVEAYGSYNPSSGAARLGTIEDDGGVYDIYRTRRINQPSIIGTASFDQYWSVRRQKRVGGTIDTGKHFDEWRRQGNLQLGAWNYMIMATEGYQSSGSAEIEVRSLD.

The N-terminal stretch at 1–17 (MVSFTTLLTAVATAVSA) is a signal peptide. Residues 28-218 (RGIQPGTGVH…SSGSAEIEVR (191 aa)) form the GH11 domain. Residue Asn-89 is glycosylated (N-linked (GlcNAc...) asparagine). Glu-113 (nucleophile) is an active-site residue. The active-site Proton donor is Glu-205.

It belongs to the glycosyl hydrolase 11 (cellulase G) family.

The protein resides in the secreted. It catalyses the reaction Endohydrolysis of (1-&gt;4)-beta-D-xylosidic linkages in xylans.. It participates in glycan degradation; xylan degradation. Retains an activity of 52.5% in the presence of 5 mM SDS. Functionally, endo-1,4-beta-xylanase involved in the hydrolysis of xylan, a major structural heterogeneous polysaccharide found in plant biomass representing the second most abundant polysaccharide in the biosphere, after cellulose. Is an alkali-tolerant enzyme, exhibiting 50.6% of activity at pH 9.0, and 26.9% even at pH 10.0. This is Endo-1,4-beta-xylanase 11A from Humicola insolens (Soft-rot fungus).